A 160-amino-acid polypeptide reads, in one-letter code: Transcription elongation factor GreA (160 aa).

Residues 50–70 (AAREQQSFNEGRIQELEAKLS) are a coiled coil.

The protein belongs to the GreA/GreB family.

In terms of biological role, necessary for efficient RNA polymerase transcription elongation past template-encoded arresting sites. The arresting sites in DNA have the property of trapping a certain fraction of elongating RNA polymerases that pass through, resulting in locked ternary complexes. Cleavage of the nascent transcript by cleavage factors such as GreA or GreB allows the resumption of elongation from the new 3'terminus. GreA releases sequences of 2 to 3 nucleotides. The chain is Transcription elongation factor GreA from Legionella pneumophila (strain Paris).